A 389-amino-acid polypeptide reads, in one-letter code: Sedoheptulose-1,7-bisphosphatase, chloroplastic (389 aa).

A disulfide bond links Cys115 and Cys120. Mg(2+) is bound by residues Asp126, Glu155, Asp173, Leu175, and Asp176. Residues 176 to 179, Tyr287, and Lys317 contribute to the substrate site; that span reads DGSS. Residue Glu323 coordinates Mg(2+).

This sequence belongs to the FBPase class 1 family. Homodimer. Mg(2+) serves as cofactor.

The protein localises to the plastid. It localises to the chloroplast. The enzyme catalyses D-sedoheptulose 1,7-bisphosphate + H2O = D-sedoheptulose 7-phosphate + phosphate. The protein operates within carbohydrate biosynthesis; Calvin cycle. This chain is Sedoheptulose-1,7-bisphosphatase, chloroplastic (CSBP), found in Chlamydomonas reinhardtii (Chlamydomonas smithii).